The following is a 226-amino-acid chain: Thymidylate kinase (226 aa).

20 to 27 (GGEGAGKS) contacts ATP.

The protein belongs to the thymidylate kinase family.

The catalysed reaction is dTMP + ATP = dTDP + ADP. Phosphorylation of dTMP to form dTDP in both de novo and salvage pathways of dTTP synthesis. This chain is Thymidylate kinase, found in Bradyrhizobium sp. (strain ORS 278).